Consider the following 252-residue polypeptide: Methionine aminopeptidase (252 aa).

His-76 is a binding site for substrate. A divalent metal cation-binding residues include Asp-93, Asp-104, and His-168. His-175 lines the substrate pocket. A divalent metal cation is bound by residues Glu-202 and Glu-233.

The protein belongs to the peptidase M24A family. Methionine aminopeptidase type 1 subfamily. Monomer. Requires Co(2+) as cofactor. Zn(2+) is required as a cofactor. The cofactor is Mn(2+). Fe(2+) serves as cofactor.

It carries out the reaction Release of N-terminal amino acids, preferentially methionine, from peptides and arylamides.. In terms of biological role, removes the N-terminal methionine from nascent proteins. The N-terminal methionine is often cleaved when the second residue in the primary sequence is small and uncharged (Met-Ala-, Cys, Gly, Pro, Ser, Thr, or Val). Requires deformylation of the N(alpha)-formylated initiator methionine before it can be hydrolyzed. This Staphylococcus aureus (strain MRSA252) protein is Methionine aminopeptidase.